Reading from the N-terminus, the 411-residue chain is Proline-responsive transcriptional activator PutR (411 aa).

It belongs to the CdaR family.

Activates transcription of the putBCP operon. Requires proline as a coactivator. The polypeptide is Proline-responsive transcriptional activator PutR (Bacillus subtilis (strain 168)).